The primary structure comprises 262 residues: Small ribosomal subunit protein eS1 (262 aa).

This sequence belongs to the eukaryotic ribosomal protein eS1 family. In terms of assembly, component of the small ribosomal subunit. Mature ribosomes consist of a small (40S) and a large (60S) subunit. The 40S subunit contains about 33 different proteins and 1 molecule of RNA (18S). The 60S subunit contains about 49 different proteins and 3 molecules of RNA (25S, 5.8S and 5S).

The protein localises to the cytoplasm. The protein is Small ribosomal subunit protein eS1 of Brassica campestris (Field mustard).